The primary structure comprises 249 residues: Phosphate import ATP-binding protein PstB (249 aa).

The ABC transporter domain maps to 3-244 (IEANDVHVYY…PKKKRTQNYI (242 aa)). 35-42 (GPSGCGKS) contacts ATP.

This sequence belongs to the ABC transporter superfamily. Phosphate importer (TC 3.A.1.7) family. As to quaternary structure, the complex is composed of two ATP-binding proteins (PstB), two transmembrane proteins (PstC and PstA) and a solute-binding protein (PstS).

Its subcellular location is the cell inner membrane. The catalysed reaction is phosphate(out) + ATP + H2O = ADP + 2 phosphate(in) + H(+). In terms of biological role, part of the ABC transporter complex PstSACB involved in phosphate import. Responsible for energy coupling to the transport system. This chain is Phosphate import ATP-binding protein PstB, found in Cytophaga hutchinsonii (strain ATCC 33406 / DSM 1761 / CIP 103989 / NBRC 15051 / NCIMB 9469 / D465).